Here is a 711-residue protein sequence, read N- to C-terminus: Pentatricopeptide repeat-containing protein At5g46580, chloroplastic (711 aa).

The N-terminal 43 residues, 1–43 (MATVLTTAIDVCFNPQNSDTKKHSLFLKPSLFRQSRSRKLNIS), are a transit peptide targeting the chloroplast. 10 PPR repeats span residues 185–219 (ETIF…GVEL), 220–254 (DNIT…GLMP), 255–289 (DEVT…GWKP), 290–324 (DAIA…DVKP), 325–359 (NVVV…GLTP), 360–394 (NEKT…KWPM), 395–425 (DFIL…MKES), 431–465 (DNFS…GVQV), 466–500 (NVMG…GVKP), and 501–535 (DDRL…NKKL). The Smr domain maps to 614 to 696 (LDVRSLSVGA…IFVATKEDLV (83 aa)).

The protein belongs to the PPR family. P subfamily.

The protein localises to the plastid. It localises to the chloroplast. This Arabidopsis thaliana (Mouse-ear cress) protein is Pentatricopeptide repeat-containing protein At5g46580, chloroplastic.